We begin with the raw amino-acid sequence, 247 residues long: Segregation and condensation protein A (247 aa).

This sequence belongs to the ScpA family. Component of a cohesin-like complex composed of ScpA, ScpB and the Smc homodimer, in which ScpA and ScpB bind to the head domain of Smc. The presence of the three proteins is required for the association of the complex with DNA.

The protein localises to the cytoplasm. Functionally, participates in chromosomal partition during cell division. May act via the formation of a condensin-like complex containing Smc and ScpB that pull DNA away from mid-cell into both cell halves. In Caldanaerobacter subterraneus subsp. tengcongensis (strain DSM 15242 / JCM 11007 / NBRC 100824 / MB4) (Thermoanaerobacter tengcongensis), this protein is Segregation and condensation protein A.